Reading from the N-terminus, the 1581-residue chain is Ankyrin repeat domain-containing protein 26 (1581 aa).

Residues 1–22 form a disordered region; sequence MKKIFGFRSKGPSPLGPSARPR. Ser13 carries the phosphoserine modification. ANK repeat units lie at residues 46–76, 80–109, 113–142, 146–175, and 179–208; these read KDMGKIHKAASVGDVAKVQHILILGKSGVND, KDRTALHLACAYGHPEVVTLLVERKCEIDA, ESSTALIKAVQCQEEECAAILLDHGADPNV, SGNTALHYAVYSENTSMAAKLLAHNANIEA, and DDLTPMLLAVKENKQHIVEFLVKKKASIHA. Disordered stretches follow at residues 225 to 270, 299 to 343, 361 to 381, and 488 to 652; these read RLQR…FDNK, LDNG…PVEG, SASQEQPNHDNLTRADGWHKS, and VLNK…QTAA. Positions 229–250 are enriched in polar residues; it reads SENSNPVDNGSEDGSLTRSYNT. Ser239 and Ser260 each carry phosphoserine. Acidic residues predominate over residues 308–319; the sequence is SDSPSESEDAIE. Over residues 327 to 337 the composition is skewed to polar residues; that stretch reads RVQTLSPSRQS. Basic and acidic residues predominate over residues 367 to 381; sequence PNHDNLTRADGWHKS. Residues 491-504 show a composition bias toward polar residues; that stretch reads KTETVGMTDAQTFK. Basic and acidic residues-rich tracts occupy residues 505-516, 524-538, and 585-601; these read SEPESVSREEQT, SQQKVEEKRKYKNNE, and KEAKKMENEKWVSREPA. Ser511 carries the phosphoserine modification. Coiled coils occupy residues 715 to 845, 876 to 1345, 1396 to 1470, and 1521 to 1550; these read RSHC…NARM, HEKE…MVEH, RSQM…RSLL, and LTKMHQELEKSINRELKEATAELESEFCRV.

Interacts with TRIO. Interacts with GPS2. Interacts with CCDC85B. Interacts with HMMR. Widely expressed. Expressed in the arcuate and ventromedial nuclei within the hypothalamus and in the ependyma and the circumventricular organs (at protein level).

Its subcellular location is the cytoplasm. The protein resides in the cytosol. Functionally, acts as a regulator of adipogenesis. Involved in the regulation of the feeding behavior. This Mus musculus (Mouse) protein is Ankyrin repeat domain-containing protein 26 (Ankrd26).